Here is a 259-residue protein sequence, read N- to C-terminus: 3-dehydroquinate dehydratase (259 aa).

Residues 50-52 and Arg-86 contribute to the 3-dehydroquinate site; that span reads EWR. Catalysis depends on His-147, which acts as the Proton donor/acceptor. Lys-174 acts as the Schiff-base intermediate with substrate in catalysis. 3-dehydroquinate contacts are provided by Arg-216, Ser-235, and Gln-239.

Belongs to the type-I 3-dehydroquinase family. In terms of assembly, homodimer.

The enzyme catalyses 3-dehydroquinate = 3-dehydroshikimate + H2O. It functions in the pathway metabolic intermediate biosynthesis; chorismate biosynthesis; chorismate from D-erythrose 4-phosphate and phosphoenolpyruvate: step 3/7. Functionally, involved in the third step of the chorismate pathway, which leads to the biosynthesis of aromatic amino acids. Catalyzes the cis-dehydration of 3-dehydroquinate (DHQ) and introduces the first double bond of the aromatic ring to yield 3-dehydroshikimate. This is 3-dehydroquinate dehydratase from Geobacillus sp. (strain WCH70).